We begin with the raw amino-acid sequence, 269 residues long: Tryptophan synthase alpha chain (269 aa).

Residues glutamate 49 and aspartate 60 each act as proton acceptor in the active site.

The protein belongs to the TrpA family. As to quaternary structure, tetramer of two alpha and two beta chains.

It catalyses the reaction (1S,2R)-1-C-(indol-3-yl)glycerol 3-phosphate + L-serine = D-glyceraldehyde 3-phosphate + L-tryptophan + H2O. It participates in amino-acid biosynthesis; L-tryptophan biosynthesis; L-tryptophan from chorismate: step 5/5. The alpha subunit is responsible for the aldol cleavage of indoleglycerol phosphate to indole and glyceraldehyde 3-phosphate. The sequence is that of Tryptophan synthase alpha chain from Pseudomonas putida (strain GB-1).